The following is a 112-amino-acid chain: Larval cuticle protein 4 (112 aa).

The first 16 residues, 1-16, serve as a signal peptide directing secretion; sequence MFKILLVCALVALVAA. In terms of domain architecture, Chitin-binding type R&amp;R spans 31 to 92; it reads ADGFVSKLVL…PQSDLLPTPP (62 aa).

Its function is as follows. Component of the larval cuticle. This Drosophila melanogaster (Fruit fly) protein is Larval cuticle protein 4 (Lcp4).